A 200-amino-acid polypeptide reads, in one-letter code: AP-5 complex subunit sigma-1 (200 aa).

In terms of assembly, probably part of the adaptor protein complex 5 (AP-5) a tetramer composed of AP5B1, AP5M1, AP5S1 and AP5Z1. Interacts with ZFYVE26 and SPG11.

It is found in the cytoplasm. The protein resides in the cytosol. The protein localises to the late endosome membrane. It localises to the lysosome membrane. In terms of biological role, as part of AP-5, a probable fifth adaptor protein complex it may be involved in endosomal transport. According to PubMed:20613862, it is required for efficient homologous recombination DNA double-strand break repair. This chain is AP-5 complex subunit sigma-1 (AP5S1), found in Homo sapiens (Human).